The following is a 246-amino-acid chain: MTDPRILVLIPARMAATRLPGKPLADIAGLPMIVHVLRRAEAAGIGRVAVATDTPEIAAVVAAHGGEAVMTRTTHPSGSDRIHEAMQKLDPEGKAEIVINLQGDFPTITPQTIREVLPPFADPAVDIVTLASQIHTEEEDLAPSVVKAVGSPIGPRRLRALYFTRATAPYGNGPRYHHIGLYAYRRAALERFVSLPPSPLELQESLEQLRAVEAGMRIDIMIVDSVPRGVDTPPDLETARSILSKS.

Belongs to the KdsB family.

The protein localises to the cytoplasm. It catalyses the reaction 3-deoxy-alpha-D-manno-oct-2-ulosonate + CTP = CMP-3-deoxy-beta-D-manno-octulosonate + diphosphate. It participates in nucleotide-sugar biosynthesis; CMP-3-deoxy-D-manno-octulosonate biosynthesis; CMP-3-deoxy-D-manno-octulosonate from 3-deoxy-D-manno-octulosonate and CTP: step 1/1. The protein operates within bacterial outer membrane biogenesis; lipopolysaccharide biosynthesis. In terms of biological role, activates KDO (a required 8-carbon sugar) for incorporation into bacterial lipopolysaccharide in Gram-negative bacteria. This is 3-deoxy-manno-octulosonate cytidylyltransferase from Bradyrhizobium diazoefficiens (strain JCM 10833 / BCRC 13528 / IAM 13628 / NBRC 14792 / USDA 110).